A 376-amino-acid polypeptide reads, in one-letter code: Chaperone protein DnaJ (376 aa).

The region spanning 4–70 (DYYQILGVSK…QKRAAYDRFG (67 aa)) is the J domain. The segment at 139–217 (GVEKNISFSS…CHGLGRYHKQ (79 aa)) adopts a CR-type zinc-finger fold. Positions 152, 155, 169, 172, 191, 194, 205, and 208 each coordinate Zn(2+). CXXCXGXG motif repeat units lie at residues 152 to 159 (CDTCHGSG), 169 to 176 (CDACGGVG), 191 to 198 (CHKCQGNG), and 205 to 212 (CKKCHGLG).

Belongs to the DnaJ family. In terms of assembly, homodimer. Requires Zn(2+) as cofactor.

Its subcellular location is the cytoplasm. In terms of biological role, participates actively in the response to hyperosmotic and heat shock by preventing the aggregation of stress-denatured proteins and by disaggregating proteins, also in an autonomous, DnaK-independent fashion. Unfolded proteins bind initially to DnaJ; upon interaction with the DnaJ-bound protein, DnaK hydrolyzes its bound ATP, resulting in the formation of a stable complex. GrpE releases ADP from DnaK; ATP binding to DnaK triggers the release of the substrate protein, thus completing the reaction cycle. Several rounds of ATP-dependent interactions between DnaJ, DnaK and GrpE are required for fully efficient folding. Also involved, together with DnaK and GrpE, in the DNA replication of plasmids through activation of initiation proteins. The sequence is that of Chaperone protein DnaJ from Rickettsia bellii (strain OSU 85-389).